We begin with the raw amino-acid sequence, 286 residues long: Polyamine aminopropyltransferase (286 aa).

The PABS domain maps to 5 to 238 (TMWHETLHDQ…GIMTFAWATD (234 aa)). S-methyl-5'-thioadenosine is bound at residue Gln-33. The spermidine site is built by His-64 and Asp-88. S-methyl-5'-thioadenosine is bound by residues Glu-108 and 140 to 141 (DG). Catalysis depends on Asp-158, which acts as the Proton acceptor. 158 to 161 (DCTD) lines the spermidine pocket. S-methyl-5'-thioadenosine is bound at residue Pro-165.

It belongs to the spermidine/spermine synthase family. In terms of assembly, homodimer or homotetramer.

The protein resides in the cytoplasm. It carries out the reaction S-adenosyl 3-(methylsulfanyl)propylamine + putrescine = S-methyl-5'-thioadenosine + spermidine + H(+). The protein operates within amine and polyamine biosynthesis; spermidine biosynthesis; spermidine from putrescine: step 1/1. In terms of biological role, catalyzes the irreversible transfer of a propylamine group from the amino donor S-adenosylmethioninamine (decarboxy-AdoMet) to putrescine (1,4-diaminobutane) to yield spermidine. The sequence is that of Polyamine aminopropyltransferase from Salmonella newport (strain SL254).